Reading from the N-terminus, the 64-residue chain is Large ribosomal subunit protein bL28 (64 aa).

The protein belongs to the bacterial ribosomal protein bL28 family.

This Bifidobacterium adolescentis (strain ATCC 15703 / DSM 20083 / NCTC 11814 / E194a) protein is Large ribosomal subunit protein bL28.